A 146-amino-acid chain; its full sequence is Hemoglobin subunit beta (146 aa).

Residues 2–146 (FLTAEEKSLV…VANALAHKYH (145 aa)) enclose the Globin domain. Position 44 is a phosphoserine (Ser-44). Lys-59 is modified (N6-acetyllysine). Residue His-63 coordinates heme b. Lys-82 carries the post-translational modification N6-acetyllysine. Residue His-92 participates in heme b binding. An S-nitrosocysteine modification is found at Cys-93. At Lys-144 the chain carries N6-acetyllysine.

Belongs to the globin family. As to quaternary structure, heterotetramer of two alpha chains and two beta chains. In terms of tissue distribution, red blood cells.

Involved in oxygen transport from the lung to the various peripheral tissues. The protein is Hemoglobin subunit beta (HBB) of Proteles cristata (Aardwolf).